A 370-amino-acid polypeptide reads, in one-letter code: Mitogen-activated protein kinase mpkC (370 aa).

Positions 19-298 (YANVRPVGLG…AAESLEHPYL (280 aa)) constitute a Protein kinase domain. ATP-binding positions include 25 to 33 (VGLGAFGLV) and Lys48. Catalysis depends on Asp140, which acts as the Proton acceptor. Thr170 bears the Phosphothreonine mark. A TXY motif is present at residues 170–172 (TGY). Tyr172 carries the phosphotyrosine modification.

Belongs to the protein kinase superfamily. Ser/Thr protein kinase family. MAP kinase subfamily. HOG1 sub-subfamily. It depends on Mg(2+) as a cofactor. In terms of processing, dually phosphorylated on Thr-170 and Tyr-172, which activates the enzyme.

The enzyme catalyses L-seryl-[protein] + ATP = O-phospho-L-seryl-[protein] + ADP + H(+). The catalysed reaction is L-threonyl-[protein] + ATP = O-phospho-L-threonyl-[protein] + ADP + H(+). With respect to regulation, activated by tyrosine and threonine phosphorylation. Functionally, mitogen-activated protein kinase required for growth on media where sorbitol or mannitol is the sole carbon source. This chain is Mitogen-activated protein kinase mpkC (mpkC), found in Aspergillus terreus (strain NIH 2624 / FGSC A1156).